The chain runs to 397 residues: Phosphoglycerate kinase (397 aa).

Substrate-binding positions include 21-23 (DFN), Arg-37, 60-63 (HLGR), Arg-120, and Arg-153. Residues Lys-206, Gly-296, Glu-327, and 353 to 356 (GGDS) contribute to the ATP site.

Belongs to the phosphoglycerate kinase family. In terms of assembly, monomer.

The protein resides in the cytoplasm. It catalyses the reaction (2R)-3-phosphoglycerate + ATP = (2R)-3-phospho-glyceroyl phosphate + ADP. It participates in carbohydrate degradation; glycolysis; pyruvate from D-glyceraldehyde 3-phosphate: step 2/5. The polypeptide is Phosphoglycerate kinase (Rhodopirellula baltica (strain DSM 10527 / NCIMB 13988 / SH1)).